Consider the following 397-residue polypeptide: Subtilisin-like serine protease Pen c 1 (397 aa).

A signal peptide spans 1–19 (MGFLKVLATSLATLAVVDA). Positions 20-115 (GTLLTASNTD…IEPDMIVNAT (96 aa)) are cleaved as a propeptide — removed in mature form. An Inhibitor I9 domain is found at 35–113 (SYIVVMNDDV…KYIEPDMIVN (79 aa)). The Peptidase S8 domain occupies 125 to 397 (SWGLARISSK…SKLLYNGINV (273 aa)). Catalysis depends on charge relay system residues Asp-157, His-188, and Ser-343.

Belongs to the peptidase S8 family.

The protein localises to the secreted. With respect to regulation, inhibited by 0.1 mM diisopropyl fluorophosphate (DFP), phenylmethanesulfonyl fluoride (PMSF), chymostatin and elastatinal. Not inhibited by N-alpha-p-tosyl-L-lysine chloromethylketone (TLCK), N-tosyl-L-phenylalanyl chloromethyl ketone (TPCK) or N-carbobenzoxy-L-phenylalanine chloromethylketone (ZPCK). Its function is as follows. Serine protease. Hydrolyzes azocasein. Cleaves peptide bonds of the oxidized insulin B chain preferably at 15-Leu-|-Tyr-16, but also at 4-Gln-|-His-5 and 24-Phe-|-Phe-25, and to a lesser extent at 5-His-|-Leu-6 and 25-Phe-|-Tyr-26. Hydrolyzes amide bonds between amino acids and 7-amino-4-methylcoumarin (AMC) in vitro. This chain is Subtilisin-like serine protease Pen c 1, found in Penicillium citrinum.